Reading from the N-terminus, the 264-residue chain is Small ribosomal subunit protein eS4 (264 aa).

An S4 RNA-binding domain is found at 42–104; it reads LPLVIIMRNR…TNENFRLLYD (63 aa).

The protein belongs to the eukaryotic ribosomal protein eS4 family.

It is found in the cytoplasm. This Solanum tuberosum (Potato) protein is Small ribosomal subunit protein eS4 (RPS4).